The primary structure comprises 151 residues: Pseudo histidine-containing phosphotransfer protein 2 (151 aa).

The HPt domain occupies 38–133 (SPNFVEEVAA…ATLKQKLESY (96 aa)).

Functionally, functions as a two-component phosphorelay mediator between cytokinin sensor histidine kinases and response regulators (B-type ARRs). Plays an important role in propagating cytokinin signal transduction. The chain is Pseudo histidine-containing phosphotransfer protein 2 from Oryza sativa subsp. japonica (Rice).